A 111-amino-acid polypeptide reads, in one-letter code: Putative pterin-4-alpha-carbinolamine dehydratase (111 aa).

The protein belongs to the pterin-4-alpha-carbinolamine dehydratase family.

It catalyses the reaction (4aS,6R)-4a-hydroxy-L-erythro-5,6,7,8-tetrahydrobiopterin = (6R)-L-erythro-6,7-dihydrobiopterin + H2O. This Marinobacter nauticus (strain ATCC 700491 / DSM 11845 / VT8) (Marinobacter aquaeolei) protein is Putative pterin-4-alpha-carbinolamine dehydratase.